The primary structure comprises 345 residues: Dihydroorotase (345 aa).

Positions 13 and 15 each coordinate Zn(2+). Substrate is bound by residues 15–17 (HLR) and Asn-41. Zn(2+) is bound by residues Lys-99, His-136, and His-174. Position 99 is an N6-carboxylysine (Lys-99). His-136 contacts substrate. Leu-219 serves as a coordination point for substrate. Zn(2+) is bound at residue Asp-247. The active site involves Asp-247. Residues His-251 and Ala-263 each contribute to the substrate site.

The protein belongs to the metallo-dependent hydrolases superfamily. DHOase family. Class II DHOase subfamily. In terms of assembly, homodimer. The cofactor is Zn(2+).

The catalysed reaction is (S)-dihydroorotate + H2O = N-carbamoyl-L-aspartate + H(+). It participates in pyrimidine metabolism; UMP biosynthesis via de novo pathway; (S)-dihydroorotate from bicarbonate: step 3/3. In terms of biological role, catalyzes the reversible cyclization of carbamoyl aspartate to dihydroorotate. This is Dihydroorotase from Agrobacterium fabrum (strain C58 / ATCC 33970) (Agrobacterium tumefaciens (strain C58)).